We begin with the raw amino-acid sequence, 293 residues long: MTNDERILSWNETPSKPRYTPPPGAIDAHCHVFGPMAQFPFSPKAKYLPRDAGPDMLFALRDHLGFARNVIVQASCHGTDNAATLDAIARAQGKARGIAVVDPAIDEAELAALHEGGMRGIRFNFLKRLVDDAPKDKFLEVAGRLPAGWHVVIYFEADILEELRPFMDAIPVPIVIDHMGRPDVRQGPDGADMKAFRRLLDSREDIWFKATCPDRLDPAGPPWDDFARSVAPLVADYADRVIWGTDWPHPNMQDAIPDDGLVVDMIPRIAPTPELQHKMLVTNPMRLYWSEEM.

A disordered region spans residues 1-20 (MTNDERILSWNETPSKPRYT). Substrate contacts are provided by residues 29 to 31 (HCH), Tyr-47, Ser-75, Arg-122, Arg-128, Tyr-154, and His-178. The active-site Proton acceptor is Asp-246. Asn-251 serves as a coordination point for substrate.

This sequence belongs to the metallo-dependent hydrolases superfamily. PDC hydrolase family. Monomer.

It carries out the reaction 2-oxo-2H-pyran-4,6-dicarboxylate + H2O = (1E)-4-oxobut-1-ene-1,2,4-tricarboxylate + H(+). The protein operates within secondary metabolite metabolism; lignin degradation. Its activity is regulated as follows. Strongly inhibited by 1 mM Zn(2+) ions. Also inhibited by pyridine-2,4-dicarboxylic acid, 5-hydroxyisophthalic acid and 5,5'-dithiobis(2-nitrobenzoic acid) (Ellman reagent). Functionally, contributes to the degradation of lignin at the level of the protocatechuate 4,5-cleavage pathway. Catalyzes the hydrolysis of 2-pyrone-4,6-dicarboxylate (PDC) to (4E)-oxalomesaconate (OMA). The keto form of OMA can tautomerize into the enol form, 4-carboxy-2-hydroxymuconate (CHM), under certain pH conditions. Also catalyzes the reverse reaction. Is essential for the growth of Sphingobium sp. SYK-6 on vanillate but is not responsible for the growth of this strain on syringate. In Sphingobium sp. (strain NBRC 103272 / SYK-6), this protein is 2-pyrone-4,6-dicarboxylate hydrolase.